The sequence spans 410 residues: uncharacterized protein (410 aa).

Residue 11–39 coordinates NAD(+); that stretch reads VLVIGGGPSGTALSAELAARGLDVQQLAP.

This sequence belongs to the lycopene cyclase family.

This is an uncharacterized protein from Deinococcus radiodurans (strain ATCC 13939 / DSM 20539 / JCM 16871 / CCUG 27074 / LMG 4051 / NBRC 15346 / NCIMB 9279 / VKM B-1422 / R1).